Consider the following 381-residue polypeptide: Metallophosphoesterase 1 (381 aa).

A helical transmembrane segment spans residues 15–35 (LIFAFVSVFVFCEYVIYYLVI). Residues aspartate 59, aspartate 101, asparagine 139, histidine 234, histidine 288, and histidine 290 each coordinate a divalent metal cation. The chain crosses the membrane as a helical span at residues 341-361 (TVLVVYCSSCLIIALITLIHL). Residues 377–381 (KHKTL) carry the Di-lysine motif motif.

It belongs to the metallophosphoesterase superfamily. MPPE1 family. It depends on Mn(2+) as a cofactor.

It is found in the endoplasmic reticulum-Golgi intermediate compartment membrane. Functionally, metallophosphoesterase that catalyzes the removal of a side-chain ethanolamine-phosphate (EtNP) from the second mannose of the GPI-anchor protein intermediate. Participates in the glycan remodeling steps of GPI-anchor maturation to allow an efficient transport of GPI-anchor proteins from the endoplasmic reticulum to the Golgi. This Danio rerio (Zebrafish) protein is Metallophosphoesterase 1.